Reading from the N-terminus, the 33-residue chain is MSDIN-like toxin proprotein 6 (33 aa).

Residues 1–10 (MSDINATRLP) constitute a propeptide that is removed on maturation. A cross-link (cyclopeptide (Leu-Pro)) is located at residues 11 to 20 (LILLAALGIP). Positions 21–33 (SDDADSTLTRGER) are excised as a propeptide.

It belongs to the MSDIN fungal toxin family. Processed by the macrocyclase-peptidase enzyme POPB to yield a toxic cyclic decapeptide. POPB first removes 10 residues from the N-terminus. Conformational trapping of the remaining peptide forces the enzyme to release this intermediate rather than proceed to macrocyclization. The enzyme rebinds the remaining peptide in a different conformation and catalyzes macrocyclization of the N-terminal 10 residues.

Its function is as follows. Probable toxin that belongs to the MSDIN-like toxin family responsible for a large number of food poisoning cases and deaths. The protein is MSDIN-like toxin proprotein 6 of Amanita phalloides (Death cap).